Here is a 282-residue protein sequence, read N- to C-terminus: Protein MGF 505-3R (282 aa).

The protein belongs to the asfivirus MGF 505 family.

In terms of biological role, plays a role in virus cell tropism, and may be required for efficient virus replication in macrophages. In Ornithodoros (relapsing fever ticks), this protein is Protein MGF 505-3R.